The primary structure comprises 207 residues: Large ribosomal subunit protein uL4 (207 aa).

The segment at 47 to 77 is disordered; that stretch reads GTADTKTRAEVSGGGRKPWRQKGTGRARHGS. Residues 63 to 77 are compositionally biased toward basic residues; it reads KPWRQKGTGRARHGS.

This sequence belongs to the universal ribosomal protein uL4 family. As to quaternary structure, part of the 50S ribosomal subunit.

Functionally, one of the primary rRNA binding proteins, this protein initially binds near the 5'-end of the 23S rRNA. It is important during the early stages of 50S assembly. It makes multiple contacts with different domains of the 23S rRNA in the assembled 50S subunit and ribosome. Forms part of the polypeptide exit tunnel. This chain is Large ribosomal subunit protein uL4, found in Symbiobacterium thermophilum (strain DSM 24528 / JCM 14929 / IAM 14863 / T).